Here is a 163-residue protein sequence, read N- to C-terminus: Nucleotide-binding protein syc0675_c (163 aa).

It belongs to the YajQ family.

In terms of biological role, nucleotide-binding protein. The polypeptide is Nucleotide-binding protein syc0675_c (Synechococcus sp. (strain ATCC 27144 / PCC 6301 / SAUG 1402/1) (Anacystis nidulans)).